Consider the following 664-residue polypeptide: Exoribonuclease 2 (664 aa).

One can recognise an RNB domain in the interval 193–521 (RIDMTHIPFV…INHRMLKALI (329 aa)). Residues 568 to 650 (QTLFTGEIFD…ENRSLVAKPT (83 aa)) enclose the S1 motif domain.

It belongs to the RNR ribonuclease family. RNase II subfamily.

It is found in the cytoplasm. It carries out the reaction Exonucleolytic cleavage in the 3'- to 5'-direction to yield nucleoside 5'-phosphates.. Its function is as follows. Involved in mRNA degradation. Hydrolyzes single-stranded polyribonucleotides processively in the 3' to 5' direction. The sequence is that of Exoribonuclease 2 from Vibrio vulnificus (strain CMCP6).